Reading from the N-terminus, the 121-residue chain is Colipase-like protein 1 (121 aa).

Residues 1–23 (MMLPQWLLLLFLLFFFLFLLTRG) form the signal peptide. Intrachain disulfides connect cysteine 39–cysteine 50, cysteine 45–cysteine 61, cysteine 49–cysteine 83, cysteine 71–cysteine 91, and cysteine 85–cysteine 107.

The protein belongs to the colipase family. As to expression, exclusively expressed in epididymis, in the corpus region.

It is found in the secreted. This Homo sapiens (Human) protein is Colipase-like protein 1 (CLPSL1).